Consider the following 194-residue polypeptide: Histone H1.0 (194 aa).

The residue at position 1 (methionine 1) is an N-acetylmethionine. Residues 1–11 (MTENSTSAPAA) show a composition bias toward low complexity. Residues 1 to 29 (MTENSTSAPAAKPKRAKASKKSTDHPKYS) are disordered. Threonine 2 is modified (N-acetylthreonine; in Histone H1.0, N-terminally processed). An H15 domain is found at 24–97 (DHPKYSDMVV…GASGSFRLAK (74 aa)). The residue at position 42 (arginine 42) is a Citrulline. The segment at 84–194 (TKGVGASGSF…SSAKRAGKKK (111 aa)) is disordered. Position 104 is an ADP-ribosylserine (serine 104). Residues 105 to 194 (VAFKKTKKEI…SSAKRAGKKK (90 aa)) show a composition bias toward basic residues.

The protein belongs to the histone H1/H5 family. Post-translationally, ADP-ribosylated on Ser-104 in response to DNA damage.

It localises to the nucleus. Its subcellular location is the chromosome. Histones H1 are necessary for the condensation of nucleosome chains into higher-order structures. The histones H1.0 are found in cells that are in terminal stages of differentiation or that have low rates of cell division. The polypeptide is Histone H1.0 (H1-0) (Pongo abelii (Sumatran orangutan)).